Consider the following 135-residue polypeptide: Large ribosomal subunit protein uL16c (135 aa).

The protein belongs to the universal ribosomal protein uL16 family. Part of the 50S ribosomal subunit.

The protein resides in the plastid. It is found in the chloroplast. The polypeptide is Large ribosomal subunit protein uL16c (Gossypium hirsutum (Upland cotton)).